Reading from the N-terminus, the 534-residue chain is Beta-glucosidase 32 (534 aa).

The first 22 residues, 1–22, serve as a signal peptide directing secretion; that stretch reads MAIKLIALVITICVASWDSAQG. Glutamine 51 serves as a coordination point for a beta-D-glucoside. A glycan (N-linked (GlcNAc...) asparagine) is linked at asparagine 68. A beta-D-glucoside is bound by residues histidine 154 and 199–200; that span reads NE. The Proton donor role is filled by glutamate 200. A disulfide bridge links cysteine 219 with cysteine 227. Tyrosine 344 is a binding site for a beta-D-glucoside. N-linked (GlcNAc...) asparagine glycosylation is present at asparagine 374. Glutamate 417 lines the a beta-D-glucoside pocket. Glutamate 417 serves as the catalytic Nucleophile. A glycan (N-linked (GlcNAc...) asparagine) is linked at asparagine 425. Residues tryptophan 467, 474–475, and phenylalanine 483 contribute to the a beta-D-glucoside site; that span reads EW.

The protein belongs to the glycosyl hydrolase 1 family.

It carries out the reaction Hydrolysis of terminal, non-reducing beta-D-glucosyl residues with release of beta-D-glucose.. The sequence is that of Beta-glucosidase 32 from Arabidopsis thaliana (Mouse-ear cress).